The sequence spans 734 residues: MASRFPKFSQGLSQDPTTRRIWFGIATAHDFESHDDMTEERLYQKIFASHFGQLAVIFLWTSGNLFHVAWQGNFEAWGQDPLHVRPIAHAIWDPHFGQPAVEAYTRGGASGPVNIAYSGVYQWWYTIGLRTNQDLYTGALFLLALSALFLIAGWLHLQPKWKPGLSWFKNAESRLNHHLSGLFGVSSLAWTGHLVHVAIPESRGEHVRWDNLLTALPHPQGLGPFLSGQWSVYAQNPDSTNHLFGTSQGAGTGILTFLGGFHPQTQSLWLTDIAHHHLAIAVVFIIAGHMYRTNFGIGHSIKEILEAHTPPGGRLGRGHKGLYDTINNSLHFQLGLALAALGVITSLVAQHMYSLPAYAFIAQDFTTQAALYTHHQYIAGFIMTGAFAHGAIFFIRDYNPEQNRDNVLARMLEHKEAIISHLSWASLFLGFHTLGLYVHNDVMLAFGTPEKQILIEPVFAQWIQSTHGKALYGFDVLLSSADSPAFTAGQSLWLPGWLDAINNNSNSLFLTIGPGDFLVHHAIALGLHTTTSIPVKGALDARGSKLMPDKKEFGYSFPCDGPGRGGTCDISAWDAFYLSVFWMLNTIGWVTFYWHWKHITLWQGNVAQFDESSTYLMGWLRDYLWLNSSQLINGYNPFGMNSLSVWAWMFLFGHLVWAIGFMFLISWRGYWQELIETLAWAHERTPLANLVRWKDKPVALSIVQARLVGLAHFSVGYIFTYAAFLIASTSGKFG.

The next 8 membrane-spanning stretches (helical) occupy residues 46 to 69, 135 to 158, 175 to 199, 273 to 291, 330 to 353, 369 to 395, 417 to 439, and 517 to 535; these read IFAS…FHVA, LYTG…LHLQ, LNHH…HVAI, IAHH…GHMY, LHFQ…QHMY, AALY…IFFI, AIIS…LYVH, and FLVH…SIPV. [4Fe-4S] cluster-binding residues include Cys559 and Cys568. Helical transmembrane passes span 575–596 and 643–665; these read AFYL…YWHW and LSVW…MFLI. 3 residues coordinate chlorophyll a: His654, Met662, and Tyr670. Trp671 provides a ligand contact to phylloquinone. Residues 707–727 traverse the membrane as a helical segment; that stretch reads LVGLAHFSVGYIFTYAAFLIA.

The protein belongs to the PsaA/PsaB family. In terms of assembly, the PsaA/B heterodimer binds the P700 chlorophyll special pair and subsequent electron acceptors. PSI consists of a core antenna complex that captures photons, and an electron transfer chain that converts photonic excitation into a charge separation. The eukaryotic PSI reaction center is composed of at least 11 subunits. It depends on P700 is a chlorophyll a/chlorophyll a' dimer, A0 is one or more chlorophyll a, A1 is one or both phylloquinones and FX is a shared 4Fe-4S iron-sulfur center. as a cofactor.

The protein localises to the plastid. Its subcellular location is the chloroplast thylakoid membrane. It carries out the reaction reduced [plastocyanin] + hnu + oxidized [2Fe-2S]-[ferredoxin] = oxidized [plastocyanin] + reduced [2Fe-2S]-[ferredoxin]. In terms of biological role, psaA and PsaB bind P700, the primary electron donor of photosystem I (PSI), as well as the electron acceptors A0, A1 and FX. PSI is a plastocyanin-ferredoxin oxidoreductase, converting photonic excitation into a charge separation, which transfers an electron from the donor P700 chlorophyll pair to the spectroscopically characterized acceptors A0, A1, FX, FA and FB in turn. Oxidized P700 is reduced on the lumenal side of the thylakoid membrane by plastocyanin. The polypeptide is Photosystem I P700 chlorophyll a apoprotein A2 (Angiopteris evecta (Mule's foot fern)).